The following is a 467-amino-acid chain: Dimethylamine methyltransferase MtbB3 (467 aa).

Position 356 (O356) is a non-standard amino acid, pyrrolysine.

This sequence belongs to the dimethylamine methyltransferase family.

The enzyme catalyses Co(I)-[dimethylamine-specific corrinoid protein] + dimethylamine + H(+) = methyl-Co(III)-[dimethylamine-specific corrinoid protein] + methylamine. It functions in the pathway one-carbon metabolism; methanogenesis from dimethylamine. In terms of biological role, catalyzes the transfer of a methyl group from dimethylamine to the corrinoid cofactor of MtbC. The chain is Dimethylamine methyltransferase MtbB3 (mtbB3) from Methanosarcina mazei (strain ATCC BAA-159 / DSM 3647 / Goe1 / Go1 / JCM 11833 / OCM 88) (Methanosarcina frisia).